Here is an 857-residue protein sequence, read N- to C-terminus: MSNSSARPESLGEYLAHLPLSDEQRAELASCTSFSELHQRLAANPAASSAEAVQASVGPRLTVGSAAELEDAEMLGVDGSGRLCLKIAPPIKRTKVVPEPWRTNVLIRMWRRMTGRPNAPQPPKRELPPARWRTVGSIRRYILLALMIGQTIVAGWYMKGILPYQGWSFVDFDEIVNQPLWDTVVQVWPYALQTSILILFGILFCWVSAGFWTALMGFLELLTGRDKYKISGSSAGNEPIAPEARTALVMPICNEDVPRVFAGLRATFESVAASGNLDRFDFFVLSDTNDTDIAVAEQQAWLDVCRETKGFGRIFYRRRRRRVKRKSGNLDDFCRRWGGEYKYMVVLDADSVMSGECLSSLVRLMEANPDAGIIQTGPKASGMDTLYARMQQFATRVYGPLFTAGLHFWQLGESHYWGHNAIIRMKPFIEHCALAPLPGKGAFAGAILSHDFVEAALMRRAGWGVWIAYDLPGSYEELPPNLLDELKRDRRWCHGNLMNFRLFLVKGMHPVHRAVFLTGVMSYLSAPLWFLFLVLSTALLATNTLMEPQYFIEPYQLYPLWPQWHPEKAVALFSTTIVLLFLPKLLSVILIWAKGAVEYGGRVKVTLSMLMEMLFSMLLAPVRMIFHTRFVLAAFLGWAATWNSPQRDDDSTPWGEAVRRHGPQTLLGVAWAALVAWLNPSFLWWLAPIVGSLVLSIPVSVISSRTRLGLAAKDEKLFLIPEEYATPQELLATDQYTHENRWHALHDGFVRAVVDPRQNALACAMATARHGQAAPIEALRAERVAKAIEVGPKGLDLNTRLALLSDPVALSRLHEQVWAEHNAAWIDVWRASINNDPHSPLLPLHPENAGQPALVGA.

The next 6 helical transmembrane spans lie at 142–162 (ILLALMIGQTIVAGWYMKGIL), 196–216 (ILILFGILFCWVSAGFWTALM), 515–535 (VFLTGVMSYLSAPLWFLFLVL), 572–592 (LFSTTIVLLFLPKLLSVILIW), 606–626 (TLSMLMEMLFSMLLAPVRMIF), and 682–702 (FLWWLAPIVGSLVLSIPVSVI).

It belongs to the glycosyltransferase 2 family. OpgH subfamily.

The protein localises to the cell inner membrane. It functions in the pathway glycan metabolism; osmoregulated periplasmic glucan (OPG) biosynthesis. Involved in the biosynthesis of osmoregulated periplasmic glucans (OPGs). This is Glucans biosynthesis glucosyltransferase H from Pseudomonas putida (strain ATCC 700007 / DSM 6899 / JCM 31910 / BCRC 17059 / LMG 24140 / F1).